Reading from the N-terminus, the 372-residue chain is Envelope phospholipase OPG057 (372 aa).

The short motif at 153-156 is the YPPL element; sequence YPPL. Residues Cys185 and Cys186 are each lipidated (S-palmitoyl cysteine; by host). The region spanning 307–334 is the PLD phosphodiesterase domain; that stretch reads FTIQNNTKLLIVDDEYVHITSANFDGTH.

Belongs to the orthopoxvirus OPG057 family. Interacts with protein OPG190. Post-translationally, palmitoylated. Attachment of the palmitate moiety is essential for correct intracellular targeting and protein function.

Its subcellular location is the virion membrane. The protein resides in the host Golgi apparatus. The protein localises to the host trans-Golgi network. It is found in the host endoplasmic reticulum membrane. It catalyses the reaction a 1,2-diacyl-sn-glycero-3-phosphocholine + H2O = a 1,2-diacyl-sn-glycero-3-phosphate + choline + H(+). In terms of biological role, major envelope protein that plays a role in the biogenesis of the viral double membrane and in egress of virus from the host cell. Produces the wrapped form of virus that is required for cell-to-cell spread. Acts as a lipase with broad specificity including phospholipase C, phospholipase A, and triacylglycerol lipase activities. This is Envelope phospholipase OPG057 (OPG057) from Homo sapiens (Human).